Here is a 169-residue protein sequence, read N- to C-terminus: UPF0398 protein Spy49_1277c (169 aa).

The protein belongs to the UPF0398 family.

This is UPF0398 protein Spy49_1277c from Streptococcus pyogenes serotype M49 (strain NZ131).